The primary structure comprises 159 residues: Anaerobic nitrite reductase HB2 (159 aa).

A Globin domain is found at 2 to 152; sequence GFTEKQEGLV…LAEAIKAEMK (151 aa). The Homodimerization motif lies at 35–39; sequence EIAPG. Heme b is bound by residues serine 45, lysine 59, histidine 63, and histidine 98. Positions 105–117 match the Homodimerization motif; the sequence is DPHFEVVKEALLR.

Belongs to the plant globin family. As to quaternary structure, homodimer. Heme b is required as a cofactor.

It localises to the cytoplasm. Its subcellular location is the nucleus. The catalysed reaction is Fe(III)-heme b-[protein] + nitric oxide + H2O = Fe(II)-heme b-[protein] + nitrite + 2 H(+). Functionally, phytoglobin that reduces nitrite to nitric oxide (NO) under anoxic conditions (e.g. during flooding or in waterlogged soil). May not function as an oxygen storage or transport protein. Has an unusually high affinity for O(2) through an hexacoordinate heme iron because of a very low dissociation constant. The sequence is that of Anaerobic nitrite reductase HB2 from Gossypium hirsutum (Upland cotton).